The chain runs to 137 residues: Putative pre-16S rRNA nuclease (137 aa).

This sequence belongs to the YqgF nuclease family.

It is found in the cytoplasm. Its function is as follows. Could be a nuclease involved in processing of the 5'-end of pre-16S rRNA. The polypeptide is Putative pre-16S rRNA nuclease (Mycoplasmopsis synoviae (strain 53) (Mycoplasma synoviae)).